We begin with the raw amino-acid sequence, 375 residues long: Outer membrane porin C (375 aa).

The first 21 residues, 1-21 (MKVKVLSLLVPALLVAGAANA), serve as a signal peptide directing secretion. Over 22–33 (AEVYNKDGNKLD) the chain is Periplasmic. The beta stranded transmembrane segment at 34 to 42 (LYGKVDGLH) threads the bilayer. The Extracellular segment spans residues 43 to 53 (YFSDDKSVDGD). The chain crosses the membrane as a beta stranded span at residues 54-63 (QTYMRLGFKG). Residues 64-73 (ETQVTDQLTG) are Periplasmic-facing. Residues 74 to 84 (YGQWEYQIQGN) form a beta stranded membrane-spanning segment. Residues 85 to 91 (APESENN) are Extracellular-facing. The chain crosses the membrane as a beta stranded span at residues 92-101 (SWTRVAFAGL). The Periplasmic portion of the chain corresponds to 102–106 (KFQDI). Residues 107–115 (GSFDYGRNY) form a beta stranded membrane-spanning segment. At 116–141 (GVVYDVTSWTDVLPEFGGDTYGSDNF) the chain is on the extracellular side. The chain crosses the membrane as a beta stranded span at residues 142 to 154 (MQQRGNGFATYRN). Residues 155-163 (TDFFGLVDG) lie on the Periplasmic side of the membrane. A beta stranded membrane pass occupies residues 164–171 (LNFAVQYQ). The Extracellular portion of the chain corresponds to 172 to 204 (GQNGSVSGENDPDFTGHGITNNGRKALRQNGDG). Residues 205 to 211 (VGGSITY) traverse the membrane as a beta stranded segment. Topologically, residues 212–215 (DYEG) are periplasmic. The beta stranded transmembrane segment at 216–223 (FGVGAAVS) threads the bilayer. The Extracellular segment spans residues 224-245 (SSKRTDAQNTAAYIGNGDRAET). The beta stranded transmembrane segment at 246 to 252 (YTGGLKY) threads the bilayer. Residues 253-256 (DANN) lie on the Periplasmic side of the membrane. A beta stranded transmembrane segment spans residues 257–264 (IYLAAQYT). Over 265–273 (QTYNATRVG) the chain is Extracellular. A beta stranded membrane pass occupies residues 274-290 (SLGWANKAQNFEAVAQY). The Periplasmic portion of the chain corresponds to 291-295 (QFDFG). The beta stranded transmembrane segment at 296 to 303 (LRPSVAYL) threads the bilayer. The Extracellular segment spans residues 304 to 326 (QSKGKNLGTIGTRNYDDEDILKY). A beta stranded transmembrane segment spans residues 327–334 (VDVGATYY). Topologically, residues 335 to 338 (FNKN) are periplasmic. The beta stranded transmembrane segment at 339–346 (MSTYVDYK) threads the bilayer. Residues 347 to 366 (INLLDDNQFTRDAGINTDNI) lie on the Extracellular side of the membrane. Residues 367-374 (VALGLVYQ) form a beta stranded membrane-spanning segment. Position 375 (phenylalanine 375) is a topological domain, periplasmic.

The protein belongs to the Gram-negative porin family. Homotrimer. Forms mixed heterotrimers with OmpF; other mixed heterotrimers are also probable.

It is found in the cell outer membrane. Functionally, forms pores that allow passive diffusion of small molecules across the outer membrane. (Microbial infection) Supports colicin E5 entry in the absence of its major receptor OmpF. Its function is as follows. (Microbial infection) A mixed OmpC-OmpF heterotrimer is the outer membrane receptor for toxin CdiA-EC536. The protein is Outer membrane porin C (ompC) of Escherichia coli O6:K15:H31 (strain 536 / UPEC).